The sequence spans 374 residues: Histone acetyltransferase type B catalytic subunit (374 aa).

2 interaction with histone H4 N-terminus regions span residues 42 to 44 (DSE) and 194 to 196 (YKY). The N-acetyltransferase domain occupies 135–303 (VVYKSSLVDD…ESSRKSLKLE (169 aa)). Residues 197 to 205 (WHYLGAKSF) form an interaction with HAT2 region. Residues 220–222 (FLI) and 227–233 (QNKGHGS) each bind acetyl-CoA. Glu-255 serves as the catalytic Proton donor/acceptor. The acetyl-CoA site is built by Asn-258 and Arg-267. Residue Ser-354 is modified to Phosphoserine.

Belongs to the HAT1 family. In terms of assembly, component of the HAT-B complex composed of at least HAT1 and HAT2. In the cytoplasm, this complex binds to the histone H4 tail. In the nucleus, the HAT-B complex has an additional component, the histone H3/H4 chaperone HIF1.

It localises to the cytoplasm. It is found in the nucleus. The catalysed reaction is L-lysyl-[protein] + acetyl-CoA = N(6)-acetyl-L-lysyl-[protein] + CoA + H(+). Catalytic component of the histone acetylase B (HAT-B) complex. Acetylates 'Lys-12' of free histone H4 in the cytoplasm. The complex is also found in the nucleus, however it is not certain that it modifies histone H4 when packaged in chromatin. Histone H4 'Lys-12' acetylation is required for telomeric silencing. Has intrinsic substrate specificity that modifies lysine in recognition sequence GXGKXG. Involved in DNA double-strand break repair. The sequence is that of Histone acetyltransferase type B catalytic subunit (HAT1) from Saccharomyces cerevisiae (strain ATCC 204508 / S288c) (Baker's yeast).